The sequence spans 257 residues: ECF RNA polymerase sigma factor SigE (257 aa).

A sigma-70 factor domain-2 region spans residues 87–153 (LVRQHADRVY…FLDMVRRRAR (67 aa)). The Polymerase core binding signature appears at 111–114 (DLTQ). Positions 186 to 236 (LQAALASLPPEFRAAVVLCDIEGLSYEEIGATLGVKLGTVRSRIHRGRQAL) are sigma-70 factor domain-4. A DNA-binding region (H-T-H motif) is located at residues 211-230 (YEEIGATLGVKLGTVRSRIH).

It belongs to the sigma-70 factor family. ECF subfamily. In terms of assembly, interacts transiently with the RNA polymerase catalytic core formed by RpoA, RpoB, RpoC and RpoZ (2 alpha, 1 beta, 1 beta' and 1 omega subunit) to form the RNA polymerase holoenzyme that can initiate transcription. Interacts (via sigma-70 factor domain 4) with cognate anti-sigma-E factor RseA under reducing conditions, which stops the sigma factor from functioning.

In terms of biological role, sigma factors are initiation factors that promote the attachment of RNA polymerase to specific initiation sites and are then released. Extracytoplasmic function (ECF) sigma factors are held in an inactive form by an anti-sigma factor until released. Responds to surface stress (H(2)O(2)). This is ECF RNA polymerase sigma factor SigE (sigE) from Mycobacterium tuberculosis (strain ATCC 35801 / TMC 107 / Erdman).